Here is a 447-residue protein sequence, read N- to C-terminus: ATP synthase subunit beta (447 aa).

147–154 (GGAGVGKT) is a binding site for ATP.

The protein belongs to the ATPase alpha/beta chains family. F-type ATPases have 2 components, CF(1) - the catalytic core - and CF(0) - the membrane proton channel. CF(1) has five subunits: alpha(3), beta(3), gamma(1), delta(1), epsilon(1). CF(0) has three main subunits: a(1), b(2) and c(9-12). The alpha and beta chains form an alternating ring which encloses part of the gamma chain. CF(1) is attached to CF(0) by a central stalk formed by the gamma and epsilon chains, while a peripheral stalk is formed by the delta and b chains.

It is found in the cell membrane. The enzyme catalyses ATP + H2O + 4 H(+)(in) = ADP + phosphate + 5 H(+)(out). Produces ATP from ADP in the presence of a proton gradient across the membrane. The catalytic sites are hosted primarily by the beta subunits. The polypeptide is ATP synthase subunit beta (Carsonella ruddii (strain PV)).